We begin with the raw amino-acid sequence, 385 residues long: uncharacterized protein (385 aa).

The Zn(2+) site is built by Asp-180, His-258, and His-275.

This sequence belongs to the iron-containing alcohol dehydrogenase family. Requires Zn(2+) as cofactor.

This is an uncharacterized protein from Synechocystis sp. (strain ATCC 27184 / PCC 6803 / Kazusa).